The primary structure comprises 340 residues: Lysophospholipase L2 (340 aa).

The protein localises to the cell inner membrane. It catalyses the reaction a 1-acyl-sn-glycero-3-phosphocholine + H2O = sn-glycerol 3-phosphocholine + a fatty acid + H(+). In Escherichia coli O6:H1 (strain CFT073 / ATCC 700928 / UPEC), this protein is Lysophospholipase L2 (pldB).